Consider the following 583-residue polypeptide: Laccase-14 (583 aa).

The first 30 residues, 1–30, serve as a signal peptide directing secretion; it reads MAPSLGSGSTRILLIVSLLLCLRQQAVVDA. Plastocyanin-like domains follow at residues 38 to 158 and 168 to 320; these read HVGN…PRPG and AEHT…YDDD. Asparagine 41 and asparagine 84 each carry an N-linked (GlcNAc...) asparagine glycan. Positions 88 and 90 each coordinate Cu cation. The N-linked (GlcNAc...) asparagine glycan is linked to asparagine 126. Residues histidine 137 and histidine 139 each contribute to the Cu cation site. N-linked (GlcNAc...) asparagine glycans are attached at residues asparagine 179, asparagine 251, asparagine 304, asparagine 338, asparagine 388, asparagine 400, asparagine 446, and asparagine 464. The 142-residue stretch at 426-567 folds into the Plastocyanin-like 3 domain; sequence DFPDRPPVMF…AMAFDVQDGP (142 aa). Positions 482, 485, 487, 546, 547, 548, and 552 each coordinate Cu cation.

This sequence belongs to the multicopper oxidase family. Cu cation serves as cofactor.

The protein localises to the secreted. The protein resides in the extracellular space. Its subcellular location is the apoplast. The catalysed reaction is 4 hydroquinone + O2 = 4 benzosemiquinone + 2 H2O. Its function is as follows. Lignin degradation and detoxification of lignin-derived products. This chain is Laccase-14 (LAC14), found in Oryza sativa subsp. japonica (Rice).